We begin with the raw amino-acid sequence, 328 residues long: MFIIKSILYRLIQMIVVLFVISTLAFILMKLSPGNPVDKILHLDVAQVSTEQINATKDKLGLNDSLLVQWWHWMNHLLHFNLGKSFESKEPVTQILFNYAPITLLISFSTLVVSLCISIPLGIIAAKRFHKLSDKVIRVISTLSISLPAFFIGIILLFIVTNLMNIDSVILSQFILPVLTLSLGMCAYIIRLVRSNLLILLKSNIVQASRLRGMNERYILIHDLLKPTILPIIPLLGISLGSLIGGTVVIENLFDIPGIGYLLMDSIKSRDYPVIQGCVLFIGFFVVIINTIADLLTLLLDPKQRLQLGNPKNKTNTPLISESSDRHA.

6 helical membrane passes run Leu11–Leu31, Leu104–Ile124, Val139–Ile159, Ile170–Ile190, Ile229–Val249, and Val279–Leu299. Residues Ala100–Thr297 form the ABC transmembrane type-1 domain.

It belongs to the binding-protein-dependent transport system permease family. OppBC subfamily. As to quaternary structure, the complex is composed of two ATP-binding proteins (NikD and NikE), two transmembrane proteins (NikB and NikC) and a solute-binding protein (NikA).

It is found in the cell membrane. Part of the ABC transporter complex NikABCDE (Opp2) involved in nickel import. Probably responsible for the translocation of the substrate across the membrane. This chain is Nickel import system permease protein NikB, found in Staphylococcus aureus (strain MRSA252).